The following is a 525-amino-acid chain: Ubiquitin carboxyl-terminal hydrolase 22 (525 aa).

The UBP-type zinc-finger motif lies at 21–138 (PGCSHLGSFK…KEEQRKAWKM (118 aa)). The Zn(2+) site is built by Cys-23, His-25, Cys-63, Cys-66, Cys-76, Cys-79, Cys-84, His-89, His-93, His-99, Cys-112, and Cys-115. The residue at position 129 (Lys-129) is an N6-acetyllysine. Thr-147 is subject to Phosphothreonine; by CDK1. Residues 176 to 520 (RGLINLGNTC…EGYLLFYHKQ (345 aa)) enclose the USP domain. Catalysis depends on Cys-185, which acts as the Nucleophile. Ser-237 carries the post-translational modification Phosphoserine; by CDK1. His-479 acts as the Proton acceptor in catalysis.

It belongs to the peptidase C19 family. UBP8 subfamily. In terms of assembly, component of some SAGA transcription coactivator-HAT complexes, at least composed of ATXN7, ATXN7L3, ENY2, GCN5L2, SUPT3H, TAF10, TRRAP and USP22. Within the SAGA complex, ATXN7L3, ENY2 and USP22 form a subcomplex required for histone deubiquitination. Interacts directly with ATXN7L3; leading to its recruitment to the SAGA complex. Interacts with ATXN7L3 and weakly with ATXN7L3B. Interacts with MED1. Phosphorylated in G2/M phase, but not in G1 phase by CDK1. In terms of processing, ubiquitinated and subsequently degraded in a CDC20-dependent manner. In terms of tissue distribution, moderately expressed in various tissues including heart and skeletal muscle, and weakly expressed in lung and liver.

Its subcellular location is the nucleus. The protein localises to the cytoplasm. The catalysed reaction is Thiol-dependent hydrolysis of ester, thioester, amide, peptide and isopeptide bonds formed by the C-terminal Gly of ubiquitin (a 76-residue protein attached to proteins as an intracellular targeting signal).. Functionally, deubiquitinase that plays a role in several cellular processes including transcriptional regulation, cell cycle progression or innate immunity. As part of the transcription regulatory histone acetylation (HAT) complex SAGA, catalyzes the deubiquitination of both histones H2A and H2B, thereby acting as a transcriptional coactivator. Recruited to specific gene promoters by activators such as MYC, where it is required for transcription. Facilitates cell-cycle progression by stabilizing CCNB1 and antagonizing its proteasome-mediated degradation in a cell cycle-specific manner. Modulates cell cycle progression and apoptosis also by antagonizing TP53 transcriptional activation through deacetylase SIRT1 stabilization. Plays multiple roles in immunity and inflammation. Participates in antiviral response by deubiquitinating the importin KPNA2, leading to IRF3 nuclear translocation and subsequent type I interferon production. Acts as a central regulator of type III IFN signaling by negatively regulating STING1 activation and ubiquitination. Inhibits NLRP3 inflammasome activation by promoting NLRP3 degradation through ATG5-dependent autophagy. Deubiquitinates CD274 to induce its stabilization and thereby participates in maintenance of immune tolerance to self. Controls necroptotic cell death by regulating RIPK3 phosphorylation and ubiquitination. During bacterial infection, promotes pro-inflammatory response by targeting TRAF6 and removing its 'Lys-48'-linked polyubiquitination. In Homo sapiens (Human), this protein is Ubiquitin carboxyl-terminal hydrolase 22 (USP22).